The sequence spans 187 residues: Probable RNA 2'-phosphotransferase (187 aa).

Belongs to the KptA/TPT1 family.

Its function is as follows. Removes the 2'-phosphate from RNA via an intermediate in which the phosphate is ADP-ribosylated by NAD followed by a presumed transesterification to release the RNA and generate ADP-ribose 1''-2''-cyclic phosphate (APPR&gt;P). May function as an ADP-ribosylase. The polypeptide is Probable RNA 2'-phosphotransferase (Pseudomonas syringae pv. tomato (strain ATCC BAA-871 / DC3000)).